The chain runs to 558 residues: 2-isopropylmalate synthase (558 aa).

Residues 30-303 form the Pyruvate carboxyltransferase domain; it reads PIWCSVDLRD…DPKLDFSNIP (274 aa). Mg(2+) contacts are provided by Asp39, His242, His244, and Asn278. The tract at residues 438–558 is regulatory domain; the sequence is LNNTLCVQDF…GLVSALNRII (121 aa).

It belongs to the alpha-IPM synthase/homocitrate synthase family. LeuA type 2 subfamily. Homodimer. Mg(2+) is required as a cofactor.

It localises to the cytoplasm. The catalysed reaction is 3-methyl-2-oxobutanoate + acetyl-CoA + H2O = (2S)-2-isopropylmalate + CoA + H(+). It participates in amino-acid biosynthesis; L-leucine biosynthesis; L-leucine from 3-methyl-2-oxobutanoate: step 1/4. In terms of biological role, catalyzes the condensation of the acetyl group of acetyl-CoA with 3-methyl-2-oxobutanoate (2-ketoisovalerate) to form 3-carboxy-3-hydroxy-4-methylpentanoate (2-isopropylmalate). The sequence is that of 2-isopropylmalate synthase from Helicobacter hepaticus (strain ATCC 51449 / 3B1).